The sequence spans 198 residues: Recombination protein RecR (198 aa).

The C4-type zinc finger occupies 57–72 (CEKCNTFTEAQICEVC). The 96-residue stretch at 80 to 175 (TLLCVVETPA…AVTRLARGVP (96 aa)) folds into the Toprim domain.

The protein belongs to the RecR family.

Functionally, may play a role in DNA repair. It seems to be involved in an RecBC-independent recombinational process of DNA repair. It may act with RecF and RecO. This Burkholderia cenocepacia (strain HI2424) protein is Recombination protein RecR.